The primary structure comprises 189 residues: Interferon alpha-1 (189 aa).

A signal peptide spans 1–23 (MARLCAFLMVLAVLSYWPTCSLG). 2 disulfide bridges follow: Cys24-Cys122 and Cys52-Cys162. Asn101 is a glycosylation site (N-linked (GlcNAc...) asparagine).

Belongs to the alpha/beta interferon family. In terms of assembly, interacts with CR2. In terms of processing, glycosylated.

The protein localises to the secreted. Its function is as follows. Produced by macrophages, IFN-alpha have antiviral activities. Interferon stimulates the production of two enzymes: a protein kinase and an oligoadenylate synthetase. This Mus musculus (Mouse) protein is Interferon alpha-1 (Ifna1).